The primary structure comprises 376 residues: tRNA-aminoacylation cofactor ARC1 (376 aa).

The tract at residues 22-46 (KEQSAQAAQWESVLKSGQIQPHLDQ) is interaction with methionyl-tRNA synthetase MES1. Interaction with glutamyl-tRNA synthetase GUS1 regions lie at residues 52–61 (RDNTFIVSTL) and 91–121 (TYTT…EINH). Positions 133–206 (KKKAPAGGAA…QNKAPEKPKP (74 aa)) are disordered. Basic and acidic residues predominate over residues 146-180 (AKADEDVSKKAKKQDHPRGKPDEETLKKLREEAKA). Low complexity predominate over residues 186-199 (KAANAKQQQEQQNK). Residues 205-307 (KPSAIDFRVG…KDSKAGDKVF (103 aa)) form the tRNA-binding domain.

The protein belongs to the tRNA-aminoacylation cofactor ARC1 family. Component of a yeast aminoacyl-tRNA synthase (aaRS) complex formed by methionyl-tRNA synthase MES1, glutamyl-tRNA synthase GUS1 and the tRNA aminoacylation cofactor ARC1 in a stoichiometric complex. Interacts (via N-ter) with MES1 (via N-ter) and GUS1 (via N-ter). Can also form a stable binary complex with either MES1 or GUS1 that is functional in terms of aminoacylation.

It is found in the cytoplasm. Binds to tRNA and functions as a cofactor for the methionyl-tRNA synthetase (MetRS) and glutamyl-tRNA synthetase (GluRS). Forms a complex with MetRS and GluRS and increases their affinity for cognate tRNAs due to the presence of a tRNA binding domain in its middle and C-terminal part. Binds specifically G4 quadruplex nucleic acid structures (these are four-stranded right-handed helices, stabilized by guanine base quartets). Also required for cytoplasmic confinement of the synthetases and tRNA. This is tRNA-aminoacylation cofactor ARC1 (ARC1) from Saccharomyces cerevisiae (strain ATCC 204508 / S288c) (Baker's yeast).